Consider the following 440-residue polypeptide: Thymidine phosphorylase (440 aa).

This sequence belongs to the thymidine/pyrimidine-nucleoside phosphorylase family. In terms of assembly, homodimer.

It carries out the reaction thymidine + phosphate = 2-deoxy-alpha-D-ribose 1-phosphate + thymine. Its pathway is pyrimidine metabolism; dTMP biosynthesis via salvage pathway; dTMP from thymine: step 1/2. In terms of biological role, the enzymes which catalyze the reversible phosphorolysis of pyrimidine nucleosides are involved in the degradation of these compounds and in their utilization as carbon and energy sources, or in the rescue of pyrimidine bases for nucleotide synthesis. This is Thymidine phosphorylase from Klebsiella pneumoniae subsp. pneumoniae (strain ATCC 700721 / MGH 78578).